The primary structure comprises 473 residues: Reticulon-4 receptor (473 aa).

The signal sequence occupies residues 1–26; the sequence is MKRASAGGSRLLAWVLWLQAWQVAAP. Intrachain disulfides connect Cys-27-Cys-33 and Cys-31-Cys-43. Positions 27–54 constitute an LRRNT domain; the sequence is CPGACVCYNEPKVTTSCPQQGLQAVPVG. LRR repeat units lie at residues 55–79, 81–103, 104–128, 129–152, 153–176, 178–200, 202–224, 225–248, and 250–273; these read IPAA…SFRA, RNLT…AFTG, LALL…TFHG, LGRL…LFRG, LAAL…TFRD, GNLT…AFRG, HSLD…AFRD, LGRL…ALAP, and RALQ…PLWA. Residue Asn-82 is glycosylated (N-linked (GlcNAc...) asparagine). The N-linked (GlcNAc...) asparagine glycan is linked to Asn-179. Residues 260–310 form the LRRCT domain; the sequence is NPWVCDCRARPLWAWLQKFRGSSSEVPCSLPQRLAGRDLKRLAANDLQGCA. Intrachain disulfides connect Cys-264–Cys-287, Cys-266–Cys-335, and Cys-309–Cys-336. The disordered stretch occupies residues 346 to 447; the sequence is VLEPGRPASA…GGGTGDSEGS (102 aa). Over residues 413-429 the composition is skewed to basic residues; the sequence is PRRRPGCSRKNRTRSHC. Positions 434–445 are enriched in gly residues; that stretch reads AGSGGGGTGDSE. Ser-447 is lipidated: GPI-anchor amidated serine. Residues 448–473 constitute a propeptide, removed in mature form; sequence GALPSLTCSLTPLGLALVLWTVLGPC.

It belongs to the Nogo receptor family. Homodimer. Interacts with MAG. Interacts with RTN4. Interacts with NGFR. Interacts with LINGO1. Interacts with KIAA0319L. Interacts with OLFM1; this inhibits interaction with LINGO1 and NGFR. Interacts with OMG. Post-translationally, N-glycosylated. O-glycosylated. Contains terminal sialic acid groups on its glycan chains. Widespread in the brain but highest levels in the gray matter. Low levels in heart and kidney; not expressed in oligodendrocytes (white matter).

Its subcellular location is the cell membrane. The protein localises to the membrane raft. The protein resides in the cell projection. It is found in the dendrite. It localises to the axon. Its subcellular location is the perikaryon. Receptor for RTN4, OMG and MAG. Functions as a receptor for the sialylated gangliosides GT1b and GM1. Besides, functions as a receptor for chondroitin sulfate proteoglycans. Can also bind heparin. Intracellular signaling cascades are triggered via the coreceptor NGFR. Signaling mediates activation of Rho and downstream reorganization of the actin cytoskeleton. Mediates axonal growth inhibition. Plays a role in regulating axon regeneration and neuronal plasticity in the adult central nervous system. Plays a role in postnatal brain development. Required for normal axon migration across the brain midline and normal formation of the corpus callosum. Protects motoneurons against apoptosis; protection against apoptosis is probably mediated via interaction with MAG. Acts in conjunction with RTN4 and LINGO1 in regulating neuronal precursor cell motility during cortical development. Like other family members, plays a role in restricting the number dendritic spines and the number of synapses that are formed during brain development. The polypeptide is Reticulon-4 receptor (RTN4R) (Homo sapiens (Human)).